Reading from the N-terminus, the 149-residue chain is D-aminoacyl-tRNA deacylase (149 aa).

Positions 137 to 138 (GP) match the Gly-cisPro motif, important for rejection of L-amino acids motif.

It belongs to the DTD family. Homodimer.

Its subcellular location is the cytoplasm. It catalyses the reaction glycyl-tRNA(Ala) + H2O = tRNA(Ala) + glycine + H(+). The enzyme catalyses a D-aminoacyl-tRNA + H2O = a tRNA + a D-alpha-amino acid + H(+). Its function is as follows. An aminoacyl-tRNA editing enzyme that deacylates mischarged D-aminoacyl-tRNAs. Also deacylates mischarged glycyl-tRNA(Ala), protecting cells against glycine mischarging by AlaRS. Acts via tRNA-based rather than protein-based catalysis; rejects L-amino acids rather than detecting D-amino acids in the active site. By recycling D-aminoacyl-tRNA to D-amino acids and free tRNA molecules, this enzyme counteracts the toxicity associated with the formation of D-aminoacyl-tRNA entities in vivo and helps enforce protein L-homochirality. In Clostridium acetobutylicum (strain ATCC 824 / DSM 792 / JCM 1419 / IAM 19013 / LMG 5710 / NBRC 13948 / NRRL B-527 / VKM B-1787 / 2291 / W), this protein is D-aminoacyl-tRNA deacylase.